Here is a 203-residue protein sequence, read N- to C-terminus: B-cell CLL/lymphoma 7 protein family member B-A (203 aa).

Disordered regions lie at residues lysine 55–aspartate 80 and serine 94–glutamate 148. A compositionally biased stretch (low complexity) spans alanine 109–serine 129.

It belongs to the BCL7 family.

In Danio rerio (Zebrafish), this protein is B-cell CLL/lymphoma 7 protein family member B-A (bcl7ba).